The sequence spans 326 residues: Eukaryotic translation initiation factor 3 subunit I (326 aa).

WD repeat units follow at residues Gly8 to Thr47, Gly50 to Ser89, Met145 to Asp184, Asp188 to Thr227, and Gly285 to Glu326.

Belongs to the eIF-3 subunit I family. As to quaternary structure, component of the eukaryotic translation initiation factor 3 (eIF-3) complex. The eIF-3 complex interacts with pix.

The protein localises to the cytoplasm. Functionally, component of the eukaryotic translation initiation factor 3 (eIF-3) complex, which is involved in protein synthesis of a specialized repertoire of mRNAs and, together with other initiation factors, stimulates binding of mRNA and methionyl-tRNAi to the 40S ribosome. The eIF-3 complex specifically targets and initiates translation of a subset of mRNAs involved in cell proliferation. The chain is Eukaryotic translation initiation factor 3 subunit I from Drosophila pseudoobscura pseudoobscura (Fruit fly).